The sequence spans 276 residues: MGMLALGAMQLAAGAVFEFPSCPKDIPFSCQNSTAVADSCCFNSPGGALLQTQFWDTNPPSGPSDSWTIHGLWPDNCDGSYGQFCDKSREYSNITAILQEQGRTELLSYMKKYWPNYEGDDEEFWEHEWNKHGTCINTIEPSCYKDYSPQKEVGDYLQKTVDLFKGLDSYKALAKAGIVPDSSKTYKRSEIESALAAIHDGKKPYISCEDGALNEIWYFYNIKGNAITGEYQPIDTLTSPGCSTSGIKYLPKKSENSTASAWKFRSDKASQSVRFN.

The signal sequence occupies residues 1-17 (MGMLALGAMQLAAGAVF). Disulfide bonds link C22–C41, C30–C77, C40–C143, C85–C135, and C208–C242. Residue N32 is glycosylated (N-linked (GlcNAc...) asparagine). H70 is an active-site residue. N93 carries N-linked (GlcNAc...) asparagine glycosylation. Residues E128 and H132 contribute to the active site. N256 is a glycosylation site (N-linked (GlcNAc...) asparagine).

The protein belongs to the RNase T2 family.

It catalyses the reaction a ribonucleotidyl-ribonucleotide-RNA + H2O = a 3'-end 3'-phospho-ribonucleotide-RNA + a 5'-end dephospho-ribonucleoside-RNA + H(+). The sequence is that of Ribonuclease T2 (rntB) from Aspergillus oryzae (strain ATCC 42149 / RIB 40) (Yellow koji mold).